The following is a 930-amino-acid chain: Beta-mannosidase A (930 aa).

The signal sequence occupies residues 1 to 21 (MHVKAETVLALLTPGLPSVVG). N-linked (GlcNAc...) asparagine glycosylation is found at asparagine 62, asparagine 246, asparagine 281, asparagine 315, and asparagine 346. The Proton donor role is filled by glutamate 478. N-linked (GlcNAc...) asparagine glycosylation is found at asparagine 536, asparagine 607, asparagine 630, asparagine 657, asparagine 737, asparagine 760, asparagine 782, asparagine 789, asparagine 797, asparagine 823, and asparagine 909.

Belongs to the glycosyl hydrolase 2 family. Beta-mannosidase A subfamily. In terms of assembly, homodimer.

It is found in the secreted. It carries out the reaction Hydrolysis of terminal, non-reducing beta-D-mannose residues in beta-D-mannosides.. The protein operates within glycan metabolism; N-glycan degradation. In terms of biological role, exoglycosidase that cleaves the single beta-linked mannose residue from the non-reducing end of beta-mannosidic oligosaccharides of various complexity and length. Involved in the degradation of polymeric mannan and galactomannan. This chain is Beta-mannosidase A (mndA), found in Neosartorya fischeri (strain ATCC 1020 / DSM 3700 / CBS 544.65 / FGSC A1164 / JCM 1740 / NRRL 181 / WB 181) (Aspergillus fischerianus).